The primary structure comprises 190 residues: CASP-like protein 2U1 (190 aa).

The Cytoplasmic portion of the chain corresponds to 1–16 (MAFTSLLGSDAERKVA). Residues 17–37 (VAEVALRAVLCGLGALAAALV) form a helical membrane-spanning segment. Residues 38 to 59 (ATDTQTRTFFSLQKKATYTDMK) are Extracellular-facing. Residues 60 to 80 (AMVLLVAAAAAAAGYSLLQAA) traverse the membrane as a helical segment. The Cytoplasmic portion of the chain corresponds to 81-100 (RCCCCVALLRTSIRPRARLL). The chain crosses the membrane as a helical span at residues 101–121 (LAWCVFACDQALAYALLAAVV). Topologically, residues 122–152 (AALQASVVAKQGLPQLQWMAICALYGAFCRQ) are extracellular. The chain crosses the membrane as a helical span at residues 153-173 (AGAGVACAVAAAVDAALLAFL). Topologically, residues 174–190 (SAFNLFRLYGAKATTTT) are cytoplasmic.

This sequence belongs to the Casparian strip membrane proteins (CASP) family. Homodimer and heterodimers.

It localises to the cell membrane. This Zea mays (Maize) protein is CASP-like protein 2U1.